The chain runs to 295 residues: Zinc finger CCCH domain-containing protein 44 (295 aa).

A disordered region spans residues Met1 to Val31. 2 C3H1-type zinc fingers span residues Gly32–Pro60 and Ser98–Arg126. Residues Ser166 to Val230 enclose the KH domain. The segment at Asn259–Ser286 adopts a C3H1-type 3 zinc-finger fold.

The protein is Zinc finger CCCH domain-containing protein 44 of Oryza sativa subsp. japonica (Rice).